Reading from the N-terminus, the 372-residue chain is Pluviatolide O-methyltransferase (372 aa).

S-adenosyl-L-homocysteine is bound by residues Gly-214, Asp-237, Asp-257, Met-258, and Lys-271. His-275 acts as the Proton acceptor in catalysis. Catalysis depends on residues Asp-306 and Glu-338.

This sequence belongs to the class I-like SAM-binding methyltransferase superfamily. Cation-independent O-methyltransferase family. COMT subfamily. In terms of assembly, homodimer. As to expression, mostly expressed in stems, and, to a lower extent, in leaves.

The catalysed reaction is (-)-pluviatolide + S-adenosyl-L-methionine = (-)-bursehernin + S-adenosyl-L-homocysteine + H(+). It participates in aromatic compound metabolism; phenylpropanoid biosynthesis. Its function is as follows. O-methyltransferase involved in the biosynthesis of etoposide, a chemotherapeutic compound of the topoisomerase inhibitor family. Catalyzes the methylation of (-)-pluviatolide to produce (-)-bursehernin. The polypeptide is Pluviatolide O-methyltransferase (Sinopodophyllum hexandrum (Himalayan may apple)).